A 478-amino-acid chain; its full sequence is Nuclear distribution protein PAC1 (478 aa).

Residues 9–41 enclose the LisH domain; the sequence is QAEELHKAMIAYLLSANLPKSAAALREELADSV. Residues 60–87 are a coiled coil; the sequence is TSVVRLQKKIMDLESRNNALQSELDSAT. WD repeat units lie at residues 113–154, 156–196, 200–247, 250–289, 292–352, 354–393, 398–439, and 440–477; these read SHRE…RTIK, HTKA…KNIR, GHDH…CVKT, GHVD…TKST, GHEH…IKTL, GHDN…KCVR, AHGH…GASA, and INGV…RVFA.

This sequence belongs to the WD repeat LIS1/nudF family. Self-associates. Interacts with NDL1 and dynein.

It localises to the cytoplasm. Its subcellular location is the cytoskeleton. It is found in the spindle pole. In terms of biological role, positively regulates the activity of the minus-end directed microtubule motor protein dynein. May enhance dynein-mediated microtubule sliding by targeting dynein to the microtubule plus end. Required for nuclear migration during vegetative growth as well as development. Required for retrograde early endosome (EE) transport from the hyphal tip. Required for localization of dynein to the mitotic spindle poles. Recruits additional proteins to the dynein complex at SPBs. In Paracoccidioides brasiliensis (strain Pb03), this protein is Nuclear distribution protein PAC1.